The sequence spans 252 residues: 3-dehydroquinate dehydratase (252 aa).

3-dehydroquinate contacts are provided by residues 46 to 48 and Arg-82; that span reads EWR. His-143 functions as the Proton donor/acceptor in the catalytic mechanism. Lys-170 functions as the Schiff-base intermediate with substrate in the catalytic mechanism. 3 residues coordinate 3-dehydroquinate: Arg-212, Ser-231, and Gln-235.

The protein belongs to the type-I 3-dehydroquinase family. In terms of assembly, homodimer.

It catalyses the reaction 3-dehydroquinate = 3-dehydroshikimate + H2O. It participates in metabolic intermediate biosynthesis; chorismate biosynthesis; chorismate from D-erythrose 4-phosphate and phosphoenolpyruvate: step 3/7. Involved in the third step of the chorismate pathway, which leads to the biosynthesis of aromatic amino acids. Catalyzes the cis-dehydration of 3-dehydroquinate (DHQ) and introduces the first double bond of the aromatic ring to yield 3-dehydroshikimate. The chain is 3-dehydroquinate dehydratase from Listeria monocytogenes serotype 4b (strain CLIP80459).